Consider the following 837-residue polypeptide: Telomere length regulation protein TEL2 homolog (837 aa).

Met-1 carries the N-acetylmethionine modification. Hydroxyproline occurs at positions 374, 419, and 422. Residues 444 to 472 (QPAGDGASEAGTSLVPATAEPPAETPAEI) are disordered. The residue at position 456 (Ser-456) is a Phosphoserine. Positions 459–471 (PATAEPPAETPAE) are enriched in low complexity. At Ser-485 the chain carries Phosphoserine; by CK2. Residues Ser-487 and Ser-491 each carry the phosphoserine modification. The disordered stretch occupies residues 627–651 (GCLGRTPQPGSPSPNTPCLPEAAVS). Ser-688 and Ser-836 each carry phosphoserine.

This sequence belongs to the TEL2 family. As to quaternary structure, component of the TTT complex composed of TELO2, TTI1 and TTI2. Interacts with ATM, ATR, MTOR, PRKDC, RUVBL2, TTI1, TTI2, SMG1 and TRRAP. Component of the mTORC1 and mTORC2 complexes. Interacts (phosphorylated form) with PIH1D1 which mediates interaction of TELO2 with the R2TP complex composed of RUVBL1, RUVBL2, PIH1D1, and RPAP3. In terms of processing, hydroxylation by PHD3 is required for a proper interaction with ATR, and activation of the ATR/CHK1/p53 pathway following DNA damage. Phosphorylated at Ser-485 by CK2 following growth factor deprivation, leading to its subsequent ubiquitination by the SCF(FBXO9) complex. Phosphorylation by CK2 only takes place when TELO2 is bound to mTORC1, not mTORC2; leading to selective ubiquitination of mTORC1-associated protein. Post-translationally, ubiquitinated by the SCF(FBXO9) complex following phosphorylation by CK2 in response to growth factor deprivation, leading to its degradation by the proteasome. Only mTORC1-associated protein is ubiquitinated and degraded, leading to selective inactivation of mTORC1 to restrain cell growth and protein translation, while mTORC2 is activated due to the relief of feedback inhibition by mTORC1.

The protein resides in the cytoplasm. It localises to the membrane. Its subcellular location is the nucleus. It is found in the chromosome. The protein localises to the telomere. Its function is as follows. Regulator of the DNA damage response (DDR). Part of the TTT complex that is required to stabilize protein levels of the phosphatidylinositol 3-kinase-related protein kinase (PIKK) family proteins. The TTT complex is involved in the cellular resistance to DNA damage stresses, like ionizing radiation (IR), ultraviolet (UV) and mitomycin C (MMC). Together with the TTT complex and HSP90 may participate in the proper folding of newly synthesized PIKKs. Promotes assembly, stabilizes and maintains the activity of mTORC1 and mTORC2 complexes, which regulate cell growth and survival in response to nutrient and hormonal signals. May be involved in telomere length regulation. The sequence is that of Telomere length regulation protein TEL2 homolog (TELO2) from Homo sapiens (Human).